The primary structure comprises 357 residues: Beta-hexosaminidase (357 aa).

Substrate contacts are provided by residues Asp72, Arg80, Arg146, and 176-177 (KH). The active-site Proton donor/acceptor is the His189. The active-site Nucleophile is Asp260.

It belongs to the glycosyl hydrolase 3 family. NagZ subfamily.

It is found in the cytoplasm. The catalysed reaction is Hydrolysis of terminal non-reducing N-acetyl-D-hexosamine residues in N-acetyl-beta-D-hexosaminides.. It functions in the pathway cell wall biogenesis; peptidoglycan recycling. Plays a role in peptidoglycan recycling by cleaving the terminal beta-1,4-linked N-acetylglucosamine (GlcNAc) from peptide-linked peptidoglycan fragments, giving rise to free GlcNAc, anhydro-N-acetylmuramic acid and anhydro-N-acetylmuramic acid-linked peptides. In Hydrogenovibrio crunogenus (strain DSM 25203 / XCL-2) (Thiomicrospira crunogena), this protein is Beta-hexosaminidase.